We begin with the raw amino-acid sequence, 206 residues long: Large ribosomal subunit protein uL4 (206 aa).

This sequence belongs to the universal ribosomal protein uL4 family. As to quaternary structure, part of the 50S ribosomal subunit.

Its function is as follows. One of the primary rRNA binding proteins, this protein initially binds near the 5'-end of the 23S rRNA. It is important during the early stages of 50S assembly. It makes multiple contacts with different domains of the 23S rRNA in the assembled 50S subunit and ribosome. In terms of biological role, forms part of the polypeptide exit tunnel. In Rhodopseudomonas palustris (strain BisB18), this protein is Large ribosomal subunit protein uL4.